Here is a 379-residue protein sequence, read N- to C-terminus: Carbamoyl phosphate synthase small chain (379 aa).

The segment at 1 to 188 is CPSase; it reads MSTPAILALA…ELGKGFTQPE (188 aa). L-glutamine-binding residues include serine 47, glycine 240, and glycine 242. The Glutamine amidotransferase type-1 domain maps to 192–379; the sequence is HVVAYDYGVK…FIELIEAAKK (188 aa). Cysteine 269 (nucleophile) is an active-site residue. The L-glutamine site is built by leucine 270, glutamine 273, asparagine 311, glycine 313, and phenylalanine 314. Catalysis depends on residues histidine 353 and glutamate 355.

It belongs to the CarA family. In terms of assembly, composed of two chains; the small (or glutamine) chain promotes the hydrolysis of glutamine to ammonia, which is used by the large (or ammonia) chain to synthesize carbamoyl phosphate. Tetramer of heterodimers (alpha,beta)4.

The enzyme catalyses hydrogencarbonate + L-glutamine + 2 ATP + H2O = carbamoyl phosphate + L-glutamate + 2 ADP + phosphate + 2 H(+). It carries out the reaction L-glutamine + H2O = L-glutamate + NH4(+). Its pathway is amino-acid biosynthesis; L-arginine biosynthesis; carbamoyl phosphate from bicarbonate: step 1/1. The protein operates within pyrimidine metabolism; UMP biosynthesis via de novo pathway; (S)-dihydroorotate from bicarbonate: step 1/3. Functionally, small subunit of the glutamine-dependent carbamoyl phosphate synthetase (CPSase). CPSase catalyzes the formation of carbamoyl phosphate from the ammonia moiety of glutamine, carbonate, and phosphate donated by ATP, constituting the first step of 2 biosynthetic pathways, one leading to arginine and/or urea and the other to pyrimidine nucleotides. The small subunit (glutamine amidotransferase) binds and cleaves glutamine to supply the large subunit with the substrate ammonia. The protein is Carbamoyl phosphate synthase small chain of Acinetobacter baylyi (strain ATCC 33305 / BD413 / ADP1).